The following is a 487-amino-acid chain: b(0,+)-type amino acid transporter 1 (487 aa).

Over residues 1-15 the composition is skewed to basic and acidic residues; the sequence is MGDTGLRKRREDEKS. The interval 1-22 is disordered; sequence MGDTGLRKRREDEKSIQSQEPK. Residues 1–31 lie on the Cytoplasmic side of the membrane; that stretch reads MGDTGLRKRREDEKSIQSQEPKTTSLQKELG. Ser-18 is subject to Phosphoserine. A helical transmembrane segment spans residues 32–55; it reads LISGISIIVGTIIGSGIFVSPKSV. 43–47 is a binding site for L-arginine; it reads IIGSG. The Extracellular portion of the chain corresponds to 56–62; it reads LSNTEAV. The helical transmembrane segment at 63-84 threads the bilayer; that stretch reads GPCLIIWAACGVLATLGALCFA. The Cytoplasmic segment spans residues 85–110; the sequence is ELGTMITKSGGEYPYLMEAYGPIPAY. A helical membrane pass occupies residues 111–137; the sequence is LFSWASLIVIKPTSFAIICLSFSEYVC. At 138–147 the chain is on the extracellular side; that stretch reads APFYVGCKPP. Transmembrane regions (helical) follow at residues 148-169 and 170-193; these read QIVV…NSLS and VRLG…IIII. Residues 194 to 217 lie on the Extracellular side of the membrane; the sequence is SGLVLLAQGNTKNFDNSFEGAQLS. The chain crosses the membrane as a helical span at residues 218 to 238; that stretch reads VGAISLAFYNGLWAYDGWNQL. Asp-233 lines the L-arginine pocket. Residues 239 to 251 lie on the Cytoplasmic side of the membrane; that stretch reads NYITEELRNPYRN. Residues 252-274 traverse the membrane as a helical segment; the sequence is LPLAIIIGIPLVTACYILMNVSY. Residues 275–302 lie on the Extracellular side of the membrane; the sequence is FTVMTATELLQSQAVAVTFGDRVLYPAS. A helical membrane pass occupies residues 303–325; sequence WIVPLFVAFSTIGAANGTCFTAG. Residues 326–351 lie on the Cytoplasmic side of the membrane; it reads RLIYVAGREGHMLKVLSYISVRRLTP. Transmembrane regions (helical) follow at residues 352–370 and 371–391; these read APAI…IPGD and INSL…LTIL. Topologically, residues 392-410 are cytoplasmic; the sequence is GLIVMRFTRKELERPIKVP. A helical membrane pass occupies residues 411-431; sequence VVIPVLMTLISVFLVLAPIIS. Over 432–434 the chain is Extracellular; sequence KPT. A helical transmembrane segment spans residues 435-450; the sequence is WEYLYCVLFILSGLLF. The Cytoplasmic segment spans residues 451-487; it reads YFLFVHYKFGWAQKISKPITMHLQMLMEVVPPEEDPE.

Belongs to the amino acid-polyamine-organocation (APC) superfamily. As to quaternary structure, disulfide-linked heterodimer composed of the catalytic light chain subunit SLC7A9 and the heavy chain subunit SLC3A1. The heterodimer is the minimal functional unit. Assembles in heterotetramers (dimers of heterodimers) and higher order oligomers; the oligomerization is mediated by SLC3A1 likely to prevent degradation and facilitate heteromer trafficking to the plasma membrane. Interacts with CAV1. Expressed in the brush border membrane in the kidney (at protein level). Kidney, small intestine, liver and placenta.

It is found in the apical cell membrane. It localises to the cell membrane. It carries out the reaction L-leucine(out) + L-arginine(in) = L-leucine(in) + L-arginine(out). The catalysed reaction is L-histidine(out) + L-arginine(in) = L-histidine(in) + L-arginine(out). It catalyses the reaction L-arginine(in) + L-phenylalanine(out) = L-arginine(out) + L-phenylalanine(in). The enzyme catalyses L-cysteine(out) + L-arginine(in) = L-cysteine(in) + L-arginine(out). It carries out the reaction L-cystine(out) + L-arginine(in) = L-cystine(in) + L-arginine(out). The catalysed reaction is L-lysine(out) + L-arginine(in) = L-lysine(in) + L-arginine(out). Its function is as follows. Associates with SLC3A1 to form a functional transporter complex that mediates the electrogenic exchange between cationic amino acids and neutral amino acids, with a stoichiometry of 1:1. Has system b(0,+)-like activity with high affinity for extracellular cationic amino acids and L-cystine and lower affinity for intracellular neutral amino acids. Substrate exchange is driven by high concentration of intracellular neutral amino acids and the intracellular reduction of L-cystine to L-cysteine. Required for reabsorption of L-cystine and dibasic amino acids across the brush border membrane in renal proximal tubules. The protein is b(0,+)-type amino acid transporter 1 of Homo sapiens (Human).